The chain runs to 66 residues: Light-harvesting protein B-800-850 alpha chain B (66 aa).

The Cytoplasmic segment spans residues 1–11 (MNQGRIWTVVN). The chain crosses the membrane as a helical span at residues 12–35 (PGVGLPLLLGSVTVIAILVHYAVL). His31 is an a bacteriochlorophyll binding site. At 36 to 66 (SNTTWFPKYWNGATVAAPAAAPAPAAPAAKK) the chain is on the periplasmic side.

It belongs to the antenna complex alpha subunit family. The core complex is formed by different alpha and beta chains, binding bacteriochlorophyll molecules, and arranged most probably in tetrameric structures disposed around the reaction center. The non-pigmented gamma chains may constitute additional components.

The protein localises to the cell inner membrane. Functionally, antenna complexes are light-harvesting systems, which transfer the excitation energy to the reaction centers. The chain is Light-harvesting protein B-800-850 alpha chain B (pucAB) from Rhodopseudomonas palustris (strain ATCC BAA-98 / CGA009).